The chain runs to 230 residues: Potassium/proton antiporter CemA (230 aa).

4 consecutive transmembrane segments (helical) span residues 7-27 (LPSF…SFSF), 106-126 (IILH…SFFL), 145-165 (LNDS…VGFH), and 181-201 (LGWA…PVIL).

It belongs to the CemA family.

It localises to the plastid. Its subcellular location is the chloroplast inner membrane. The enzyme catalyses K(+)(in) + H(+)(out) = K(+)(out) + H(+)(in). Its function is as follows. Contributes to K(+)/H(+) antiport activity by supporting proton efflux to control proton extrusion and homeostasis in chloroplasts in a light-dependent manner to modulate photosynthesis. Prevents excessive induction of non-photochemical quenching (NPQ) under continuous-light conditions. Indirectly promotes efficient inorganic carbon uptake into chloroplasts. The sequence is that of Potassium/proton antiporter CemA from Zea mays (Maize).